Consider the following 136-residue polypeptide: Large ribosomal subunit protein bL12 (136 aa).

Belongs to the bacterial ribosomal protein bL12 family. As to quaternary structure, homodimer. Part of the ribosomal stalk of the 50S ribosomal subunit. Forms a multimeric L10(L12)X complex, where L10 forms an elongated spine to which 2 to 4 L12 dimers bind in a sequential fashion. Binds GTP-bound translation factors.

Its function is as follows. Forms part of the ribosomal stalk which helps the ribosome interact with GTP-bound translation factors. Is thus essential for accurate translation. The polypeptide is Large ribosomal subunit protein bL12 (Synechococcus sp. (strain JA-2-3B'a(2-13)) (Cyanobacteria bacterium Yellowstone B-Prime)).